We begin with the raw amino-acid sequence, 351 residues long: Photosystem II D2 protein (351 aa).

A helical transmembrane segment spans residues 39 to 59 (TAYLAVGGWFTGTTFVTSWYT). Chlorophyll a is bound at residue His-116. The chain crosses the membrane as a helical span at residues 123–139 (GFCLRQFEIARLVGIRP). 2 residues coordinate pheophytin a: Gln-128 and Asn-141. A helical membrane pass occupies residues 151–164 (IFVSVFLLYPLGQA). His-196 provides a ligand contact to chlorophyll a. A helical transmembrane segment spans residues 206–226 (GALLCAIHGATVENTLFEDGD). His-213 and Phe-260 together coordinate a plastoquinone. His-213 provides a ligand contact to Fe cation. Residue His-267 participates in Fe cation binding. Residues 277–293 (GLWTSAIGIVGLALNLR) traverse the membrane as a helical segment.

Belongs to the reaction center PufL/M/PsbA/D family. In terms of assembly, PSII is composed of 1 copy each of membrane proteins PsbA, PsbB, PsbC, PsbD, PsbE, PsbF, PsbH, PsbI, PsbJ, PsbK, PsbL, PsbM, PsbT, PsbX, PsbY, PsbZ, Psb30/Ycf12, at least 3 peripheral proteins of the oxygen-evolving complex and a large number of cofactors. It forms dimeric complexes. The D1/D2 heterodimer binds P680, chlorophylls that are the primary electron donor of PSII, and subsequent electron acceptors. It shares a non-heme iron and each subunit binds pheophytin, quinone, additional chlorophylls, carotenoids and lipids. There is also a Cl(-1) ion associated with D1 and D2, which is required for oxygen evolution. The PSII complex binds additional chlorophylls, carotenoids and specific lipids. serves as cofactor.

Its subcellular location is the plastid. The protein localises to the chloroplast thylakoid membrane. It carries out the reaction 2 a plastoquinone + 4 hnu + 2 H2O = 2 a plastoquinol + O2. In terms of biological role, photosystem II (PSII) is a light-driven water:plastoquinone oxidoreductase that uses light energy to abstract electrons from H(2)O, generating O(2) and a proton gradient subsequently used for ATP formation. It consists of a core antenna complex that captures photons, and an electron transfer chain that converts photonic excitation into a charge separation. The D1/D2 (PsbA/PsbD) reaction center heterodimer binds P680, the primary electron donor of PSII as well as several subsequent electron acceptors. D2 is needed for assembly of a stable PSII complex. The sequence is that of Photosystem II D2 protein from Heterosigma akashiwo (strain NIES-293 / 8280G21-1).